Reading from the N-terminus, the 396-residue chain is NADH-quinone oxidoreductase subunit D (396 aa).

Belongs to the complex I 49 kDa subunit family. As to quaternary structure, NDH-1 is composed of 14 different subunits. Subunits NuoB, C, D, E, F, and G constitute the peripheral sector of the complex.

The protein resides in the cell inner membrane. It carries out the reaction a quinone + NADH + 5 H(+)(in) = a quinol + NAD(+) + 4 H(+)(out). In terms of biological role, NDH-1 shuttles electrons from NADH, via FMN and iron-sulfur (Fe-S) centers, to quinones in the respiratory chain. The immediate electron acceptor for the enzyme in this species is believed to be ubiquinone. Couples the redox reaction to proton translocation (for every two electrons transferred, four hydrogen ions are translocated across the cytoplasmic membrane), and thus conserves the redox energy in a proton gradient. This chain is NADH-quinone oxidoreductase subunit D, found in Brucella canis (strain ATCC 23365 / NCTC 10854 / RM-666).